The primary structure comprises 137 residues: Large ribosomal subunit protein uL16c (137 aa).

The interval 1–21 (MLSPKRTKFRRHHRGRMKGKA) is disordered.

Belongs to the universal ribosomal protein uL16 family. As to quaternary structure, part of the 50S ribosomal subunit.

It is found in the plastid. Its subcellular location is the chloroplast. The polypeptide is Large ribosomal subunit protein uL16c (Tupiella akineta (Green alga)).